The following is a 361-amino-acid chain: tRNA-specific 2-thiouridylase MnmA (361 aa).

Residues 6–13 (AMSGGVDS) and Leu32 contribute to the ATP site. The active-site Nucleophile is Cys99. Cysteines 99 and 196 form a disulfide. Gly123 contributes to the ATP binding site. The interval 145–147 (RDQ) is interaction with tRNA. Cys196 serves as the catalytic Cysteine persulfide intermediate.

Belongs to the MnmA/TRMU family.

It is found in the cytoplasm. The catalysed reaction is S-sulfanyl-L-cysteinyl-[protein] + uridine(34) in tRNA + AH2 + ATP = 2-thiouridine(34) in tRNA + L-cysteinyl-[protein] + A + AMP + diphosphate + H(+). Its function is as follows. Catalyzes the 2-thiolation of uridine at the wobble position (U34) of tRNA, leading to the formation of s(2)U34. This Gluconobacter oxydans (strain 621H) (Gluconobacter suboxydans) protein is tRNA-specific 2-thiouridylase MnmA.